Reading from the N-terminus, the 667-residue chain is MLTHKTCQARKKMQVSFVIRDAEEKQHRNGVNALQLDANNGKLYSAGRDAIIRVWNTRTESNEKYIQSMEHHNDWVNDIVLCCNGRNLISASCDTTVKVWNAQKGFCMSTLRTHRDYVQALAYAKDREQVASAGLDKAIFLWDVNTLTALTASNNTVTTSSLTGSKDSIYSLAMNPSGTVIVSGSTENILRIWDPRTCMRSMKLRGHTENVRCLVVSPDGNQVVSGSSDGTIKVWNLGQQRCVQTIHVHKEGVWSLLMSENFQYIISGSRDRNIIVTEMRNPSNKMLVCEEQAPVLSLGYNIDKTGVWATTWNSDIRCWKLPMYDRCTLNSSGGLDAQWTQGGTELACIKGGAAIKECTVLNDKRYIITKDSQDQVVVYDVLRVVKKEQLGAVDYEAEVKKRNKQVYIPNWFTVDLKTGMPTIVLGQEEVDCFAAWVSIEAGLPECVDPTTEIKINYGKLLLEALLEHWTPHNMPPNDMDQDMHGNGYFQVPKHTPVIFSEVGGRTVCRLLVRDAAGDSESTLLQETAPQWVTDVVIEKNIPKFLKIPFFLQPHPQMTKPERTKKDRLVANEFIQCRKVCEHVLEKVLNAETTPSGGNANNSLQNSQSDANSEGSQLPAEERIELWCNDVVVDPNMDLRTVRHFIWKQSTDLTFQYKTKQNFNYDGK.

8 WD repeats span residues Q26–Y65, H71–T110, T113–A152, G164–K203, G206–T245, V248–L287, E290–L329, and K350–Q389. Residues E591–S615 are disordered.

This sequence belongs to the WD repeat WDR48 family. Catalytic component of the Usp12-46 deubiquitylase complex consisting of Usp12-46, Wdr20 and Uaf1; regulatory subunit that, together wtih Wdr20, stabilizes Usp12-46. The Usp12-46 deubiquitylase complex associates with arr/arrow; the interaction leads to deubiquitination and stabilization of arr/arrow.

Functionally, regulatory component of the Usp12-46 deubiquitylase complex. activates deubiquitination by increasing the catalytic turnover without increasing the affinity of deubiquitinating enzymes for the substrate. The complex deubiquitylates the wg/wingless-signaling receptor arr/arrow, which stabilizes the receptor and increases its concentration at the cell surface; this enhances the sensitivity of cells to wg/wingless-signal stimulation. This increases the amplitude and spatial range of the signaling response to the wg/wingless morphogen gradient, facilitating the precise concentration-dependent regulation of its target genes. Together with Wdr20 and Usp12-46 required for wg/wingless-mediated signaling in the wing imaginal disc and for wg/wingless-dependent regulation of intestinal stem cell proliferation. In Drosophila ananassae (Fruit fly), this protein is WD repeat-containing protein 48 homolog.